The chain runs to 228 residues: MGTKRSSLKGSLLLLLLMSSLFLFKSVESLPICPSGAVNCQVSLSDLFDRAVMLSHYIHSPSSEMFNEFDERYAQGRGFITKAINSCHTSSLSTPEDKEQAQQIHHEDLLNLILRVLRSWNDPLYHLVTEVRSMQEAPDTILSKAMEIEEQNKRLLEGMEKIVGQVHPGDRENEVYSVWSGLPSLQMADEDTRLFAFYNLLHCLRRDSHKIDNYLKLLKCRLIHDSNC.

The N-terminal stretch at 1–29 (MGTKRSSLKGSLLLLLLMSSLFLFKSVES) is a signal peptide. An intrachain disulfide couples Cys33 to Cys40. Phosphoserine occurs at positions 55, 63, and 119. Cystine bridges form between Cys87–Cys203 and Cys220–Cys228.

This sequence belongs to the somatotropin/prolactin family. Interacts with PRLR.

It is found in the secreted. Prolactin acts primarily on the mammary gland by promoting lactation, mammogenesis, mitogenesis and osmoregulation. This Trichosurus vulpecula (Brush-tailed possum) protein is Prolactin (PRL).